Here is a 126-residue protein sequence, read N- to C-terminus: Ribosome-binding factor A (126 aa).

The protein belongs to the RbfA family. In terms of assembly, monomer. Binds 30S ribosomal subunits, but not 50S ribosomal subunits or 70S ribosomes.

Its subcellular location is the cytoplasm. One of several proteins that assist in the late maturation steps of the functional core of the 30S ribosomal subunit. Associates with free 30S ribosomal subunits (but not with 30S subunits that are part of 70S ribosomes or polysomes). Required for efficient processing of 16S rRNA. May interact with the 5'-terminal helix region of 16S rRNA. The sequence is that of Ribosome-binding factor A from Thermosynechococcus vestitus (strain NIES-2133 / IAM M-273 / BP-1).